A 136-amino-acid polypeptide reads, in one-letter code: uncharacterized protein (136 aa).

The protein resides in the mitochondrion. This is an uncharacterized protein from Arabidopsis thaliana (Mouse-ear cress).